The primary structure comprises 960 residues: Semaphorin-6C (960 aa).

The N-terminal stretch at 1–23 is a signal peptide; sequence MPRAPHSMPLLLLLLLSLPQAQT. Over 24-635 the chain is Extracellular; sequence AFPQDPIPLL…ASASRSIPIP (612 aa). The 487-residue stretch at 29–515 folds into the Sema domain; the sequence is PIPLLTSDLQ…FPGCIVYLSL (487 aa). N-linked (GlcNAc...) asparagine glycosylation is present at Asn69. 4 cysteine pairs are disulfide-bonded: Cys110-Cys120, Cys138-Cys147, Cys261-Cys372, and Cys286-Cys331. The N-linked (GlcNAc...) asparagine glycan is linked to Asn285. The N-linked (GlcNAc...) asparagine glycan is linked to Asn436. Intrachain disulfides connect Cys478/Cys509, Cys518/Cys536, Cys524/Cys569, and Cys528/Cys544. The interval 555-624 is disordered; the sequence is VDLTGNQESM…HTQGVRRDLS (70 aa). The chain crosses the membrane as a helical span at residues 636 to 656; that stretch reads LLLACVAAAFALGASVSGLLV. The Cytoplasmic segment spans residues 657–960; that stretch reads SCACRRANRR…PAPHGSHFNF (304 aa). Disordered regions lie at residues 685 to 725, 745 to 792, and 806 to 960; these read LARL…SPPE, ASGG…PGQE, and HGPQ…HFNF. Residues 899–909 show a composition bias toward low complexity; the sequence is RVPSGGPSRYS. The segment covering 922–935 has biased composition (basic and acidic residues); it reads PDGHRGRSLKRVDV. The span at 940–952 shows a compositional bias: pro residues; that stretch reads SPKPPLATPPQPA.

This sequence belongs to the semaphorin family. As to expression, expressed in many regions of the developing nervous system, probably in neurons and their precursors, but also in nonneural tissue such as immature muscle and dermis. In adult, strong expression in the skeletal muscle and moderate expression in the brain, where cerebellum shows the highest expression. Also expressed in almost all areas of the CNS.

It localises to the cell membrane. Its function is as follows. Shows growth cone collapsing activity on dorsal root ganglion (DRG) neurons in vitro. May be a stop signal for the DRG neurons in their target areas, and possibly also for other neurons. May also be involved in the maintenance and remodeling of neuronal connections. The polypeptide is Semaphorin-6C (Sema6c) (Rattus norvegicus (Rat)).